A 556-amino-acid chain; its full sequence is 2-succinyl-5-enolpyruvyl-6-hydroxy-3-cyclohexene-1-carboxylate synthase (556 aa).

It belongs to the TPP enzyme family. MenD subfamily. In terms of assembly, homodimer. It depends on Mg(2+) as a cofactor. Mn(2+) is required as a cofactor. The cofactor is thiamine diphosphate.

The enzyme catalyses isochorismate + 2-oxoglutarate + H(+) = 5-enolpyruvoyl-6-hydroxy-2-succinyl-cyclohex-3-ene-1-carboxylate + CO2. It functions in the pathway quinol/quinone metabolism; 1,4-dihydroxy-2-naphthoate biosynthesis; 1,4-dihydroxy-2-naphthoate from chorismate: step 2/7. The protein operates within quinol/quinone metabolism; menaquinone biosynthesis. In terms of biological role, catalyzes the thiamine diphosphate-dependent decarboxylation of 2-oxoglutarate and the subsequent addition of the resulting succinic semialdehyde-thiamine pyrophosphate anion to isochorismate to yield 2-succinyl-5-enolpyruvyl-6-hydroxy-3-cyclohexene-1-carboxylate (SEPHCHC). This chain is 2-succinyl-5-enolpyruvyl-6-hydroxy-3-cyclohexene-1-carboxylate synthase, found in Klebsiella pneumoniae subsp. pneumoniae (strain ATCC 700721 / MGH 78578).